Consider the following 300-residue polypeptide: Protoheme IX farnesyltransferase (300 aa).

Helical transmembrane passes span 21–43 (PRVV…RGVP), 45–65 (PLSV…AGAF), 94–114 (ASLI…LLFV), 117–137 (LSAL…SIVL), 145–167 (IVWG…TGSI), 171–193 (AIVL…SIHY), 213–233 (LVVL…LLLI), 235–255 (VAHM…WFVY), and 272–292 (AMHI…SVGI).

The protein belongs to the UbiA prenyltransferase family. Protoheme IX farnesyltransferase subfamily.

It is found in the cell membrane. It carries out the reaction heme b + (2E,6E)-farnesyl diphosphate + H2O = Fe(II)-heme o + diphosphate. It participates in porphyrin-containing compound metabolism; heme O biosynthesis; heme O from protoheme: step 1/1. Its function is as follows. Converts heme B (protoheme IX) to heme O by substitution of the vinyl group on carbon 2 of heme B porphyrin ring with a hydroxyethyl farnesyl side group. This is Protoheme IX farnesyltransferase from Tropheryma whipplei (strain TW08/27) (Whipple's bacillus).